The primary structure comprises 986 residues: Zinc finger protein 445 (986 aa).

The region spanning 52–134 (RQLFRQLRYH…ALLEELQRDL (83 aa)) is the SCAN box domain. One can recognise a KRAB domain in the interval 219-289 (LTFQDVEVTF…NICTVQLKRD (71 aa)). Residues lysine 302, lysine 360, and lysine 385 each participate in a glycyl lysine isopeptide (Lys-Gly) (interchain with G-Cter in SUMO2) cross-link. Positions 433–460 (QNTGLKENGKDRYGETSRKSWHAHPEHR) are disordered. The segment covering 439 to 460 (ENGKDRYGETSRKSWHAHPEHR) has biased composition (basic and acidic residues). C2H2-type zinc fingers lie at residues 470–492 (FQCR…EKIH) and 498–520 (YQCS…QKTH). A Glycyl lysine isopeptide (Lys-Gly) (interchain with G-Cter in SUMO2) cross-link involves residue lysine 524. 2 consecutive C2H2-type zinc fingers follow at residues 553-575 (LHCN…QRIH) and 581-604 (YKCT…KLHH). Residue lysine 609 forms a Glycyl lysine isopeptide (Lys-Gly) (interchain with G-Cter in SUMO2) linkage. 2 consecutive C2H2-type zinc fingers follow at residues 634–656 (FPCQ…QRIH) and 662–686 (YQCS…RTQH). Lysine 691 participates in a covalent cross-link: Glycyl lysine isopeptide (Lys-Gly) (interchain with G-Cter in SUMO2). C2H2-type zinc fingers lie at residues 718-740 (NKCK…ERVH), 746-768 (YQCR…QRKH), 796-818 (FWCQ…KGIH), and 824-846 (FKCN…QRIH). A Glycyl lysine isopeptide (Lys-Gly) (interchain with G-Cter in SUMO2) cross-link involves residue lysine 929. 2 C2H2-type zinc fingers span residues 933–955 (HKCS…KRCH) and 961–983 (FKCI…MKNH).

Belongs to the krueppel C2H2-type zinc-finger protein family.

It localises to the nucleus. Transcription regulator required to maintain maternal and paternal gene imprinting, a process by which gene expression is restricted in a parent of origin-specific manner by epigenetic modification of genomic DNA and chromatin, including DNA methylation. Acts by controlling DNA methylation during the earliest multicellular stages of development at multiple imprinting control regions (ICRs). Acts together with ZFP57, but ZFP57 plays the predominant role in imprinting maintenance. In contrast, ZNF445 seems to be the major factor in human early embryonic imprinting maintenance. This Mus musculus (Mouse) protein is Zinc finger protein 445 (Znf445).